The chain runs to 314 residues: Cytochrome f (314 aa).

Residues 1–30 (MATNKFFKSLLFTLTIAISSFGFCVENSSA) form the signal peptide. The heme site is built by Y31, C51, C54, and H55. Residues 280–300 (ILGYLAFCFCLLLTQVLLVLK) traverse the membrane as a helical segment.

Belongs to the cytochrome f family. The 4 large subunits of the cytochrome b6-f complex are cytochrome b6, subunit IV (17 kDa polypeptide, petD), cytochrome f and the Rieske protein, while the 4 small subunits are PetG, PetL, PetM and PetN. The complex functions as a dimer. It depends on heme as a cofactor.

It is found in the plastid. The protein resides in the chloroplast thylakoid membrane. Component of the cytochrome b6-f complex, which mediates electron transfer between photosystem II (PSII) and photosystem I (PSI), cyclic electron flow around PSI, and state transitions. This chain is Cytochrome f, found in Thalassiosira pseudonana (Marine diatom).